The following is a 271-amino-acid chain: Oxamate carbamoyltransferase subunit AllH (271 aa).

The protein belongs to the AllH family. As to quaternary structure, the OXTCase is composed of 3 subunits, AllF, AllG and AllH. It depends on Mg(2+) as a cofactor.

It catalyses the reaction oxamate + carbamoyl phosphate = N-carbamoyl-2-oxoglycine + phosphate. Its pathway is nitrogen metabolism; (S)-allantoin degradation. Component of a carbamoyltransferase involved in the anaerobic nitrogen utilization via the assimilation of allantoin. Catalyzes the conversion of oxalurate (N-carbamoyl-2-oxoglycine) to oxamate and carbamoyl phosphate. The polypeptide is Oxamate carbamoyltransferase subunit AllH (Escherichia coli O157:H7).